Consider the following 1001-residue polypeptide: RNA-binding protein 12B (1001 aa).

Residues serine 98, serine 101, and serine 112 each carry the phosphoserine modification. Lysine 114 is covalently cross-linked (Glycyl lysine isopeptide (Lys-Gly) (interchain with G-Cter in SUMO2)). Over residues asparagine 119–glutamine 128 the composition is skewed to polar residues. Positions asparagine 119–threonine 147 are disordered. Lysine 151 participates in a covalent cross-link: Glycyl lysine isopeptide (Lys-Gly) (interchain with G-Cter in SUMO2). Residues proline 155–glutamate 230 form the RRM 1 domain. A compositionally biased stretch (basic and acidic residues) spans leucine 247–arginine 262. The disordered stretch occupies residues leucine 247–serine 278. A phosphoserine mark is found at serine 250 and serine 254. The span at histidine 263–serine 278 shows a compositional bias: basic residues. Position 276 is a phosphothreonine (threonine 276). Residues serine 278, serine 280, serine 292, and serine 294 each carry the phosphoserine modification. The RRM 2 domain occupies phenylalanine 284–arginine 360. The residue at position 319 (lysine 319) is an N6-acetyllysine. Lysine 335 participates in a covalent cross-link: Glycyl lysine isopeptide (Lys-Gly) (interchain with G-Cter in SUMO2). Position 377 is a phosphoserine (serine 377). In terms of domain architecture, RRM 3 spans leucine 400–glutamate 477. Residues lysine 514 and lysine 541 each participate in a glycyl lysine isopeptide (Lys-Gly) (interchain with G-Cter in SUMO2) cross-link. A disordered region spans residues glutamine 544 to phenylalanine 587. 3 positions are modified to phosphoserine: serine 575, serine 591, and serine 638. Residues leucine 631–serine 881 show a composition bias toward basic and acidic residues. Residues leucine 631–histidine 882 are disordered. The residue at position 640 (threonine 640) is a Phosphothreonine. Phosphoserine is present on residues serine 710 and serine 718. Lysine 895 participates in a covalent cross-link: Glycyl lysine isopeptide (Lys-Gly) (interchain with G-Cter in SUMO2). One can recognise an RRM 4 domain in the interval threonine 925–leucine 1001.

In Homo sapiens (Human), this protein is RNA-binding protein 12B (RBM12B).